A 341-amino-acid polypeptide reads, in one-letter code: Elongation factor Ts (341 aa).

Residues 80–83 (TDFV) are involved in Mg(2+) ion dislocation from EF-Tu.

This sequence belongs to the EF-Ts family.

The protein localises to the cytoplasm. Functionally, associates with the EF-Tu.GDP complex and induces the exchange of GDP to GTP. It remains bound to the aminoacyl-tRNA.EF-Tu.GTP complex up to the GTP hydrolysis stage on the ribosome. This is Elongation factor Ts from Lactobacillus acidophilus (strain ATCC 700396 / NCK56 / N2 / NCFM).